Reading from the N-terminus, the 223-residue chain is B-cell antigen receptor complex-associated protein alpha chain (223 aa).

The N-terminal stretch at 1–31 (MPEGPQALQSPPATIFLLLISAAGLGPGCQA) is a signal peptide. The 89-residue stretch at 32–120 (LWVEWGPPSV…KIQRSCGTYL (89 aa)) folds into the Ig-like C2-type domain. The Extracellular segment spans residues 32–140 (LWVEWGPPSV…LDMGEGTKNN (109 aa)). The cysteines at positions 53 and 104 are disulfide-linked. Residues N56, N61, N71, and N95 are each glycosylated (N-linked (GlcNAc...) asparagine). Residues 141–161 (IITAEGIILLICAVVPGTLLL) traverse the membrane as a helical segment. The Cytoplasmic portion of the chain corresponds to 162 to 223 (FRKRWQNMKF…HIGDAQLEKP (62 aa)). The region spanning 174 to 202 (DIQDDYEDENLYEGLNLDDCSMYEDISRG) is the ITAM domain. Y185 is subject to Phosphotyrosine; by SRC-type Tyr-kinases. Y196 carries the post-translational modification Phosphotyrosine. R201 is modified (asymmetric dimethylarginine; by PRMT1). A Phosphotyrosine; by Tyr-kinases modification is found at Y207.

In terms of assembly, heterodimer of alpha and beta chains; disulfide-linked. Part of the B-cell antigen receptor complex where the alpha/beta chain heterodimer is non-covalently associated with an antigen-specific membrane-bound surface immunoglobulin of two heavy chains and two light chains. Interacts through its phosphorylated ITAM domain with the SH2 domains of SYK which stimulates SYK autophosphorylation and activation. Also interacts, when phosphorylated on Tyr-207, with the SH2 domain of BLNK/SLP65, bringing BLNK into proximity with SYK and allowing SYK to phosphorylate BLNK which is necessary for trafficking of the BCR to late endosomes. Interacts with Src-family tyrosine kinases including FYN and LYN, increasing their activity. In terms of processing, phosphorylated on tyrosine, serine and threonine residues upon B-cell activation. Phosphorylation of tyrosine residues by Src-family kinases, including LYN, is an early and essential feature of the BCR signaling cascade. The phosphorylated tyrosines serve as docking sites for SH2-domain containing kinases, leading to their activation which in turn leads to phosphorylation of downstream targets. Phosphorylation of serine and threonine residues may prevent subsequent tyrosine phosphorylation. Arginine methylation in the ITAM domain may interfere with the binding of SYK. It promotes signals leading to B-cell differentiation. In terms of tissue distribution, B-cells.

The protein localises to the cell membrane. In terms of biological role, required in cooperation with CD79B for initiation of the signal transduction cascade activated by binding of antigen to the B-cell antigen receptor complex (BCR) which leads to internalization of the complex, trafficking to late endosomes and antigen presentation. Also required for BCR surface expression and for efficient differentiation of pro- and pre-B-cells. Stimulates SYK autophosphorylation and activation. Binds to BLNK, bringing BLNK into proximity with SYK and allowing SYK to phosphorylate BLNK. Also interacts with and increases activity of some Src-family tyrosine kinases. Represses BCR signaling during development of immature B-cells. This chain is B-cell antigen receptor complex-associated protein alpha chain (CD79A), found in Bos taurus (Bovine).